The sequence spans 96 residues: Co-chaperonin GroES (96 aa).

The protein belongs to the GroES chaperonin family. In terms of assembly, heptamer of 7 subunits arranged in a ring. Interacts with the chaperonin GroEL.

It is found in the cytoplasm. In terms of biological role, together with the chaperonin GroEL, plays an essential role in assisting protein folding. The GroEL-GroES system forms a nano-cage that allows encapsulation of the non-native substrate proteins and provides a physical environment optimized to promote and accelerate protein folding. GroES binds to the apical surface of the GroEL ring, thereby capping the opening of the GroEL channel. The chain is Co-chaperonin GroES from Nitrosococcus oceani (strain ATCC 19707 / BCRC 17464 / JCM 30415 / NCIMB 11848 / C-107).